The following is a 226-amino-acid chain: NADH-ubiquinone oxidoreductase 19.3 kDa subunit, mitochondrial (226 aa).

Residues 40–68 (ATGAVAPAGAQHGIARRERREVPLPSQEG) are disordered. 4 residues coordinate [4Fe-4S] cluster: C101, C102, C166, and C196.

It belongs to the complex I 20 kDa subunit family. Complex I is composed of about 40 different subunits. This is a component of the iron-sulfur (IP) fragment of the enzyme. Requires [4Fe-4S] cluster as cofactor.

It is found in the mitochondrion. It catalyses the reaction a ubiquinone + NADH + 5 H(+)(in) = a ubiquinol + NAD(+) + 4 H(+)(out). Functionally, core subunit of the mitochondrial membrane respiratory chain NADH dehydrogenase (Complex I) that is believed to belong to the minimal assembly required for catalysis. Complex I functions in the transfer of electrons from NADH to the respiratory chain. The immediate electron acceptor for the enzyme is believed to be ubiquinone. The chain is NADH-ubiquinone oxidoreductase 19.3 kDa subunit, mitochondrial from Neurospora crassa (strain ATCC 24698 / 74-OR23-1A / CBS 708.71 / DSM 1257 / FGSC 987).